Consider the following 1022-residue polypeptide: Leucine--tRNA ligase (1022 aa).

A 'HIGH' region motif is present at residues Pro47–His57. The 'KMSKS' region motif lies at Lys697 to Ser701. Lys700 contributes to the ATP binding site.

This sequence belongs to the class-I aminoacyl-tRNA synthetase family.

Its subcellular location is the cytoplasm. It carries out the reaction tRNA(Leu) + L-leucine + ATP = L-leucyl-tRNA(Leu) + AMP + diphosphate. The sequence is that of Leucine--tRNA ligase from Ignicoccus hospitalis (strain KIN4/I / DSM 18386 / JCM 14125).